The sequence spans 465 residues: Nucleolar and spindle-associated protein 1 (465 aa).

Positions 32-61 (ADKLLRALKAHLKNEARKENENQDEIQTSA) form a coiled coil. Disordered regions lie at residues 44–123 (KNEA…QNHS), 148–207 (VEVP…TPNF), and 252–294 (GVPA…GSAK). Residues 56–75 (EIQTSASSCDEPEIQTSSQE) are compositionally biased toward polar residues. Basic and acidic residues predominate over residues 76–86 (QAEREPDDHVT). The span at 87-96 (KTRGRRKTVH) shows a compositional bias: basic residues. At Ser-152 the chain carries Phosphoserine. Over residues 154–166 (PNESQGDENTVSS) the composition is skewed to polar residues. The span at 169–179 (HGIDGNEDPRV) shows a compositional bias: basic and acidic residues. Thr-204 bears the Phosphothreonine mark. The interval 262-405 (GRLSVACTPG…HKGKLKPWGQ (144 aa)) is interaction with microtubules. Ser-265 is subject to Phosphoserine. Phosphothreonine is present on Thr-269. Phosphoserine occurs at positions 272, 292, 299, and 334. The tract at residues 308–338 (SAATKDNEHKRSLTKTPARKSPHVTTSVNTP) is disordered. Phosphothreonine occurs at positions 337, 361, and 372. Residues Ser-375 and Ser-386 each carry the phosphoserine modification. The interval 396–454 (HKGKLKPWGQSKENNSLHEHVNRVSFHKKTYKQPRLQTREEQRKKHERERKEKKEKVLG) is disordered. The short motif at 407-413 (KENNSLH) is the KEN box element. The stretch at 430–457 (RLQTREEQRKKHERERKEKKEKVLGVRR) forms a coiled coil. Over residues 432 to 453 (QTREEQRKKHERERKEKKEKVL) the composition is skewed to basic and acidic residues.

The protein belongs to the NUSAP family. Interacts with DNA and microtubules. Microtubule bundling is inhibited by IPO7, KPNA2 and KPNB1 while association with DNA is also inhibited by IPO7 and KPNA2. Post-translationally, ubiquitinated. Ubiquitination by FZR1 may lead to proteasome-dependent degradation of this protein.

It is found in the cytoplasm. The protein resides in the nucleus. The protein localises to the nucleolus. It localises to the cytoskeleton. Its subcellular location is the spindle. It is found in the chromosome. Functionally, microtubule-associated protein with the capacity to bundle and stabilize microtubules. May associate with chromosomes and promote the organization of mitotic spindle microtubules around them. The chain is Nucleolar and spindle-associated protein 1 (NUSAP1) from Bos taurus (Bovine).